Reading from the N-terminus, the 595-residue chain is SVP1-like protein 2 (595 aa).

The segment at 1–28 (MVLAHSINTNPNTNTNTNNTSTTSSTTT) is disordered. One copy of the WD 1 repeat lies at 30–68 (PNDSKILCINFNQDQGCFAISHEQGFLVYNTDPIELRVK). 2 stretches are compositionally biased toward low complexity: residues 76 to 112 (HTTS…GSNN) and 270 to 339 (LSPT…TTTT). Disordered regions lie at residues 76–132 (HTTS…GSGS) and 264–342 (FSKR…TSAK). 2 WD repeats span residues 389–429 (AHKS…LLYE) and 434–473 (IDRA…YPND). The segment at 467-490 (ETQYPNDGGSGGTKDGGGGGRGSK) is disordered. Residues 474 to 488 (GGSGGTKDGGGGGRG) show a composition bias toward gly residues.

The protein belongs to the WD repeat PROPPIN family.

The protein resides in the vacuole membrane. Its subcellular location is the cytoplasmic vesicle membrane. Functionally, involved in mitochondrial or peroxisomal functions and amino acid signaling pathways. This Candida albicans (strain SC5314 / ATCC MYA-2876) (Yeast) protein is SVP1-like protein 2 (HSV2).